Consider the following 1642-residue polypeptide: Cortactin-binding protein 2 (1642 aa).

Disordered regions lie at residues 1-27 (MATDGASCEPDFSRAPEDAAGAPAEAA), 203-222 (KKKTSALEEELATEKRRSTE), 366-433 (IGAS…HPGL), 446-471 (GSNANDPDQNGNTTQSPPSRDVSPTS), and 491-611 (RFTS…PSID). Positions 119 to 276 (RKMQERMSTQ…EQLKRGTDSK (158 aa)) form a coiled coil. A compositionally biased stretch (polar residues) spans 385–394 (GPSTGSTADL). The segment covering 395-407 (TSSPTPVPSTVSP) has biased composition (low complexity). Arginine 491 carries the asymmetric dimethylarginine modification. The segment covering 497–506 (AGAPPRPGAP) has biased composition (pro residues). A compositionally biased stretch (polar residues) spans 576–586 (TVASPPSTLPQ). 6 ANK repeats span residues 702–732 (GRPTLLQQAAAQGNVTLLSMLLNEEGLDINY), 736–765 (DGHSALYSAAKNGHTDCVRLLLNAEAQVNA), 769–798 (NGFTPLCAAAAQGHFKCVELLIAYDANINH), 802–831 (GGQTPLYLACKNGNKECIKLLLEAGTDRSV), 835–864 (DGWTPIHAAVDTGNVDSLKLLMYHRAPAHG), and 904–934 (EGWTAAHIAASKGFKNCLEVLCRHGGLEPER). The interval 1441–1469 (SGAWRKVSTSPRKKSGRFSSPTWNKPDLS) is disordered. A Phosphoserine modification is found at serine 1513. A disordered region spans residues 1545–1642 (LRRFDSSGNN…NSRDLEPTQK (98 aa)). Polar residues-rich tracts occupy residues 1552-1563 (GNNPVFSATVNN) and 1571-1588 (KEVSPLSSHQTTECSNSK). Positions 1613-1627 (SQNTKRSSSSSNTRQ) are enriched in low complexity.

In terms of assembly, interacts with CTTN/cortactin SH3 domain. Interacts with STRN, STRN4/zinedin and MOB4/phocein; this interactions mediate the association with the STRIPAK core complex and may regulate dendritic spine distribution of the STRIPAK complex in hippocampal neurons. Activation of glutamate receptors weakens the interaction with STRN and STRN4.

It localises to the cytoplasm. The protein resides in the cell cortex. It is found in the cell projection. The protein localises to the dendritic spine. Functionally, regulates the dendritic spine distribution of CTTN/cortactin in hippocampal neurons, and thus controls dendritic spinogenesis and dendritic spine maintenance. Associates with the striatin-interacting phosphatase and kinase (STRIPAK) core complex to regulate dendritic spine distribution of the STRIPAK complex in hippocampal neurons. In Muntiacus muntjak (Barking deer), this protein is Cortactin-binding protein 2 (CTTNBP2).